Reading from the N-terminus, the 457-residue chain is Multidrug resistance protein MdtK (457 aa).

The next 12 membrane-spanning stretches (helical) occupy residues Leu11 to Val31, Ile53 to Ala73, Trp93 to Ile113, Ala127 to Ala147, Gly160 to Tyr180, Leu188 to Met208, Leu243 to Val263, Ile276 to Thr296, Ala314 to Val334, Val350 to Ile370, Ile387 to Ala407, and Pro418 to Leu438.

The protein belongs to the multi antimicrobial extrusion (MATE) (TC 2.A.66.1) family. MdtK subfamily.

It is found in the cell inner membrane. Multidrug efflux pump that functions probably as a Na(+)/drug antiporter. The protein is Multidrug resistance protein MdtK of Salmonella newport (strain SL254).